A 124-amino-acid polypeptide reads, in one-letter code: UPF0231 protein Sama_0645 (124 aa).

Belongs to the UPF0231 family.

The sequence is that of UPF0231 protein Sama_0645 from Shewanella amazonensis (strain ATCC BAA-1098 / SB2B).